We begin with the raw amino-acid sequence, 482 residues long: uncharacterized protein (482 aa).

Residues Ile5–Pro79 form the DWNN domain. The tract at residues Gly86 to Arg108 is disordered. The CCHC-type zinc-finger motif lies at Tyr183–Thr200. The segment at Cys282–His322 adopts an RING-type; degenerate zinc-finger fold. Disordered regions lie at residues Lys346 to Val393 and Gln447 to Asn482. A compositionally biased stretch (low complexity) spans Asn451–Ser466.

It localises to the nucleus. This is an uncharacterized protein from Schizosaccharomyces pombe (strain 972 / ATCC 24843) (Fission yeast).